A 305-amino-acid polypeptide reads, in one-letter code: Pseudouridine-5'-phosphate glycosidase (305 aa).

Glutamate 28 functions as the Proton donor in the catalytic mechanism. 2 residues coordinate substrate: lysine 89 and valine 109. Residue aspartate 141 participates in Mn(2+) binding. Position 143–145 (143–145 (SAD)) interacts with substrate. The active-site Nucleophile is the lysine 162.

This sequence belongs to the pseudouridine-5'-phosphate glycosidase family. Homotrimer. Requires Mn(2+) as cofactor.

It catalyses the reaction D-ribose 5-phosphate + uracil = psi-UMP + H2O. Functionally, catalyzes the reversible cleavage of pseudouridine 5'-phosphate (PsiMP) to ribose 5-phosphate and uracil. Functions biologically in the cleavage direction, as part of a pseudouridine degradation pathway. In Dinoroseobacter shibae (strain DSM 16493 / NCIMB 14021 / DFL 12), this protein is Pseudouridine-5'-phosphate glycosidase.